A 1057-amino-acid chain; its full sequence is Carbamoyl phosphate synthase large chain (1057 aa).

The tract at residues 1–401 is carboxyphosphate synthetic domain; it reads MPKRNDIKTI…SLLKAIRSLE (401 aa). Residues arginine 129, arginine 169, glycine 175, glycine 176, lysine 208, isoleucine 210, glutamate 215, glycine 241, isoleucine 242, histidine 243, glutamine 284, and glutamate 298 each contribute to the ATP site. The ATP-grasp 1 domain maps to 133 to 327; the sequence is RTLMNDLNVP…IAKLAAKIAV (195 aa). Mg(2+) is bound by residues glutamine 284, glutamate 298, and asparagine 300. Positions 284, 298, and 300 each coordinate Mn(2+). The interval 402 to 546 is oligomerization domain; sequence YGVHHLGLPN…YGTYETENES (145 aa). The tract at residues 547 to 929 is carbamoyl phosphate synthetic domain; sequence IVTDKEKILV…ALFKGLTGSG (383 aa). The ATP-grasp 2 domain maps to 671–861; the sequence is EALLRKINVP…MAQLAMRAII (191 aa). Positions 707, 746, 748, 752, 777, 778, 779, 780, 820, and 832 each coordinate ATP. Residues glutamine 820, glutamate 832, and asparagine 834 each contribute to the Mg(2+) site. The Mn(2+) site is built by glutamine 820, glutamate 832, and asparagine 834. The region spanning 930–1057 is the MGS-like domain; it reads VEVKDHGTVL…ESMTFTMRQM (128 aa). An allosteric domain region spans residues 930–1057; it reads VEVKDHGTVL…ESMTFTMRQM (128 aa).

It belongs to the CarB family. In terms of assembly, composed of two chains; the small (or glutamine) chain promotes the hydrolysis of glutamine to ammonia, which is used by the large (or ammonia) chain to synthesize carbamoyl phosphate. Tetramer of heterodimers (alpha,beta)4. Mg(2+) is required as a cofactor. It depends on Mn(2+) as a cofactor.

It catalyses the reaction hydrogencarbonate + L-glutamine + 2 ATP + H2O = carbamoyl phosphate + L-glutamate + 2 ADP + phosphate + 2 H(+). It carries out the reaction hydrogencarbonate + NH4(+) + 2 ATP = carbamoyl phosphate + 2 ADP + phosphate + 2 H(+). The protein operates within amino-acid biosynthesis; L-arginine biosynthesis; carbamoyl phosphate from bicarbonate: step 1/1. It participates in pyrimidine metabolism; UMP biosynthesis via de novo pathway; (S)-dihydroorotate from bicarbonate: step 1/3. Functionally, large subunit of the glutamine-dependent carbamoyl phosphate synthetase (CPSase). CPSase catalyzes the formation of carbamoyl phosphate from the ammonia moiety of glutamine, carbonate, and phosphate donated by ATP, constituting the first step of 2 biosynthetic pathways, one leading to arginine and/or urea and the other to pyrimidine nucleotides. The large subunit (synthetase) binds the substrates ammonia (free or transferred from glutamine from the small subunit), hydrogencarbonate and ATP and carries out an ATP-coupled ligase reaction, activating hydrogencarbonate by forming carboxy phosphate which reacts with ammonia to form carbamoyl phosphate. The polypeptide is Carbamoyl phosphate synthase large chain (Staphylococcus aureus (strain Mu3 / ATCC 700698)).